The following is a 426-amino-acid chain: Glutamate-1-semialdehyde 2,1-aminomutase (426 aa).

At lysine 265 the chain carries N6-(pyridoxal phosphate)lysine.

The protein belongs to the class-III pyridoxal-phosphate-dependent aminotransferase family. HemL subfamily. As to quaternary structure, homodimer. Pyridoxal 5'-phosphate is required as a cofactor.

It is found in the cytoplasm. It catalyses the reaction (S)-4-amino-5-oxopentanoate = 5-aminolevulinate. The protein operates within porphyrin-containing compound metabolism; protoporphyrin-IX biosynthesis; 5-aminolevulinate from L-glutamyl-tRNA(Glu): step 2/2. The protein is Glutamate-1-semialdehyde 2,1-aminomutase of Aliarcobacter butzleri (strain RM4018) (Arcobacter butzleri).